Consider the following 173-residue polypeptide: Photosystem I assembly protein Ycf3 (173 aa).

TPR repeat units lie at residues A35 to T68, G72 to L105, and G120 to N153.

This sequence belongs to the Ycf3 family.

Its subcellular location is the cellular thylakoid membrane. In terms of biological role, essential for the assembly of the photosystem I (PSI) complex. May act as a chaperone-like factor to guide the assembly of the PSI subunits. The polypeptide is Photosystem I assembly protein Ycf3 (Trichormus variabilis (strain ATCC 29413 / PCC 7937) (Anabaena variabilis)).